A 472-amino-acid chain; its full sequence is 7-dimethylallyltryptophan synthase hasE (472 aa).

Glutamate 138 serves as a coordination point for L-tryptophan. Residues arginine 154, lysine 239, tyrosine 241, lysine 313, tyrosine 315, tyrosine 393, tyrosine 460, and tyrosine 464 each contribute to the dimethylallyl diphosphate site.

The protein belongs to the tryptophan dimethylallyltransferase family. In terms of assembly, homodimer.

The catalysed reaction is L-tryptophan + dimethylallyl diphosphate = 7-(3-methylbut-2-enyl)-L-tryptophan + diphosphate. It catalyses the reaction an N-terminal L-tryptophanyl-L-alpha-aminoacyl-[peptide] + H2O = an N-terminal L-alpha-aminoacyl-[peptide] + L-tryptophan. The protein operates within secondary metabolite biosynthesis. 7-dimethylallyltryptophan synthase; part of the gene cluster that mediates the biosynthesis of hexadehydro-astechrome (HAS), a tryptophan-derived iron(III)-complex that acts as a virulence factor in infected mice. Catalyzes the prenylation of L-tryptophan at the C-7 position of the indole moiety. The enzyme is specific for dimethylallyl diphosphate (DMAPP) as prenyl donor. Also accepts D-tryptophan, typtophan-derivatives with modifications at the side chain or the indole ring, and linear and cyclic dipeptides such as H-L-Trp-L-Gly-OH or cyclo-L-Trp-L-Gly as substrates, however with lower efficiency. Also has tryptophan aminopeptidase activity towards linear peptides with a tryptophanyl moiety at the N-terminus. Dipeptides are better substrates than peptides with 3 or more amino acids. Enzymatic rate constants however are much higher for the prenyltransferase activity than for the aminopeptidase activity. Within the hexadehydro-astechrome biosyntetic pathway, hasE catalyzes the prenylation of the hasD-tethered tryptophan or the resulting tethered Trp-Ala dipeptid. The HAS biosynthesis begins with the synthesis of a tethered Trp-Ala dipeptide by the NRPS hasD. The 7-dimethylallyltryptophan synthase hasE then catalyzes the prenylation of the hasD-tethered tryptophan or the resulting tethered Trp-Ala dipeptide at the C-7 position of the indole moiety. HAS biosynthesis continues via tethered intermediates with the succesive actions of the cytochrome P450 monooxygenase hasH, the O-methyltransferase hasC, and the FAD-linked oxidoreductase hasG. The resulting O-methylated diketopiperazine is then released from hasD. Finally, three O-methylated diketopiperazine molecules assemble in a trimeric complex with Fe(III) to produce hexadehydro-astechrome. The polypeptide is 7-dimethylallyltryptophan synthase hasE (Aspergillus fumigatus (strain CBS 144.89 / FGSC A1163 / CEA10) (Neosartorya fumigata)).